Reading from the N-terminus, the 166-residue chain is RNA polymerase sigma factor SigV (166 aa).

Residues 38-51 carry the Polymerase core binding motif; it reads DIVQESIKKALSSV. The segment at residues 131–150 is a DNA-binding region (H-T-H motif); it reads LEEIAEITGENTNTVKTRLY.

It belongs to the sigma-70 factor family. ECF subfamily. As to quaternary structure, interacts with RsiV.

Its function is as follows. Sigma factors are initiation factors that promote the attachment of RNA polymerase to specific initiation sites and are then released. Positively regulates the expression of proteins involved in stress responses against bacitracin, paraquat and tellurite. This is RNA polymerase sigma factor SigV (sigV) from Bacillus subtilis (strain 168).